The following is a 180-amino-acid chain: Large ribosomal subunit protein uL5 (180 aa).

It belongs to the universal ribosomal protein uL5 family. As to quaternary structure, part of the 50S ribosomal subunit; part of the 5S rRNA/L5/L18/L25 subcomplex. Contacts the 5S rRNA and the P site tRNA. Forms a bridge to the 30S subunit in the 70S ribosome.

Functionally, this is one of the proteins that bind and probably mediate the attachment of the 5S RNA into the large ribosomal subunit, where it forms part of the central protuberance. In the 70S ribosome it contacts protein S13 of the 30S subunit (bridge B1b), connecting the 2 subunits; this bridge is implicated in subunit movement. Contacts the P site tRNA; the 5S rRNA and some of its associated proteins might help stabilize positioning of ribosome-bound tRNAs. This is Large ribosomal subunit protein uL5 from Lactobacillus delbrueckii subsp. bulgaricus (strain ATCC 11842 / DSM 20081 / BCRC 10696 / JCM 1002 / NBRC 13953 / NCIMB 11778 / NCTC 12712 / WDCM 00102 / Lb 14).